A 212-amino-acid polypeptide reads, in one-letter code: Imidazole glycerol phosphate synthase subunit HisH (212 aa).

Residues Arg-3–Thr-208 enclose the Glutamine amidotransferase type-1 domain. The active-site Nucleophile is the Cys-81. Catalysis depends on residues His-183 and Glu-185.

As to quaternary structure, heterodimer of HisH and HisF.

Its subcellular location is the cytoplasm. The enzyme catalyses 5-[(5-phospho-1-deoxy-D-ribulos-1-ylimino)methylamino]-1-(5-phospho-beta-D-ribosyl)imidazole-4-carboxamide + L-glutamine = D-erythro-1-(imidazol-4-yl)glycerol 3-phosphate + 5-amino-1-(5-phospho-beta-D-ribosyl)imidazole-4-carboxamide + L-glutamate + H(+). It carries out the reaction L-glutamine + H2O = L-glutamate + NH4(+). The protein operates within amino-acid biosynthesis; L-histidine biosynthesis; L-histidine from 5-phospho-alpha-D-ribose 1-diphosphate: step 5/9. In terms of biological role, IGPS catalyzes the conversion of PRFAR and glutamine to IGP, AICAR and glutamate. The HisH subunit catalyzes the hydrolysis of glutamine to glutamate and ammonia as part of the synthesis of IGP and AICAR. The resulting ammonia molecule is channeled to the active site of HisF. This chain is Imidazole glycerol phosphate synthase subunit HisH, found in Symbiobacterium thermophilum (strain DSM 24528 / JCM 14929 / IAM 14863 / T).